The following is a 121-amino-acid chain: Basic phospholipase A2 caudoxin (121 aa).

Intrachain disulfides connect Cys25/Cys114, Cys27/Cys43, Cys42/Cys94, Cys48/Cys121, Cys49/Cys87, Cys56/Cys80, and Cys74/Cys85. Ca(2+) contacts are provided by Tyr26, Gly28, and Gly30. The active site involves His46. A Ca(2+)-binding site is contributed by Asp47. The active site involves Asp88.

Belongs to the phospholipase A2 family. Group II subfamily. D49 sub-subfamily. In terms of assembly, monomer. It depends on Ca(2+) as a cofactor. In terms of tissue distribution, expressed by the venom gland.

It is found in the secreted. It carries out the reaction a 1,2-diacyl-sn-glycero-3-phosphocholine + H2O = a 1-acyl-sn-glycero-3-phosphocholine + a fatty acid + H(+). Snake venom phospholipase A2 (PLA2) that shows anticoagulant activity and presynaptic neurotoxicity. Acts as an anticoagulant toxin by inhibiting prothrombinase complex formation. Shows about 50% of the prothrombinase complex inhibition compared to CM-IV of N.nigricollis venom. Acts as a neurotoxin by inhibiting neuromuscular transmission by blocking acetylcholine release from the nerve termini. PLA2 catalyzes the calcium-dependent hydrolysis of the 2-acyl groups in 3-sn-phosphoglycerides. In Bitis caudalis (Horned adder), this protein is Basic phospholipase A2 caudoxin.